Here is a 333-residue protein sequence, read N- to C-terminus: Taste receptor type 2 member 38 (333 aa).

The Extracellular portion of the chain corresponds to Met1 to Thr17. A helical membrane pass occupies residues Phe18 to Leu38. Residues Val39–Cys55 lie on the Cytoplasmic side of the membrane. The helical transmembrane segment at Val56–Ile76 threads the bilayer. Residues Gln77–Ala94 lie on the Extracellular side of the membrane. The helical transmembrane segment at Ile95–Leu115 threads the bilayer. At Leu116–Gln142 the chain is on the cytoplasmic side. The helical transmembrane segment at Met143–Phe163 threads the bilayer. Residues Ser164–Asn190 lie on the Extracellular side of the membrane. Residue Asn178 is glycosylated (N-linked (GlcNAc...) asparagine). A helical membrane pass occupies residues Leu191–Val211. Over Ser212–Ser251 the chain is Cytoplasmic. The chain crosses the membrane as a helical span at residues Phe252–Leu272. The Extracellular portion of the chain corresponds to Trp273–Lys276. Residues Ile277–Leu297 form a helical membrane-spanning segment. At Ile298–Cys333 the chain is on the cytoplasmic side.

Belongs to the G-protein coupled receptor T2R family.

It is found in the membrane. In terms of biological role, receptor that may play a role in the perception of bitterness and is gustducin-linked. May play a role in sensing the chemical composition of the gastrointestinal content. The activity of this receptor may stimulate alpha gustducin, mediate PLC-beta-2 activation and lead to the gating of TRPM5. This is Taste receptor type 2 member 38 (TAS2R38) from Gorilla gorilla gorilla (Western lowland gorilla).